The primary structure comprises 97 residues: U6-theraphotoxin-Hhn1a 3 (97 aa).

Residues 1-33 (MLIKQFSRRSKNTKVQILLAFAALFVLAVGSYA) form the signal peptide. A propeptide spanning residues 34–61 (SESKKLDLRDALFSAMFSADYQLNPQER) is cleaved from the precursor. 3 cysteine pairs are disulfide-bonded: Cys63–Cys77, Cys70–Cys82, and Cys76–Cys89.

Belongs to the neurotoxin 10 (Hwtx-1) family. 12 (Hntx-12) subfamily. As to expression, expressed by the venom gland.

Its subcellular location is the secreted. Its function is as follows. Ion channel inhibitor. The chain is U6-theraphotoxin-Hhn1a 3 from Cyriopagopus hainanus (Chinese bird spider).